The primary structure comprises 1700 residues: Ras-responsive element-binding protein 1 (1700 aa).

The interval 31-63 (TENGGSPQGIKSPMKPPGPNRIGRRNQETKEEK) is disordered. Residues Ser-36 and Ser-42 each carry the phosphoserine modification. 3 C2H2-type zinc fingers span residues 66–88 (YNCPLCEKICTTQHQLTMHIRQH), 97–119 (HACSICGKSLSSASSLDRHMLVH), and 125–147 (YKCTVCGQSFTTNGNMHRHMKIH). The interval 146–195 (IHEKDTNSTTAAAPPSPLKRRRLSSKRKLSHDAESEDPGPAKKMVEDGQS) is disordered. A Phosphoserine modification is found at Ser-161. Basic residues predominate over residues 163 to 174 (LKRRRLSSKRKL). A phosphoserine mark is found at Ser-175 and Ser-180. The segment covering 184 to 195 (GPAKKMVEDGQS) has biased composition (basic and acidic residues). Residues 206-228 (FHCPVCFKEFVCKYELETHMETH) form a C2H2-type 4 zinc finger. A Phosphoserine modification is found at Ser-229. 2 C2H2-type zinc fingers span residues 233 to 256 (LRCDICCVTFRTHRGLLRHNALVH) and 314 to 336 (FVCDTCDKAFPMLSSLILHRQSH). Residues Lys-433, Lys-500, Lys-549, Lys-564, Lys-591, and Lys-611 each participate in a glycyl lysine isopeptide (Lys-Gly) (interchain with G-Cter in SUMO2) cross-link. A Glycyl lysine isopeptide (Lys-Gly) (interchain with G-Cter in SUMO1); alternate cross-link involves residue Lys-613. A Glycyl lysine isopeptide (Lys-Gly) (interchain with G-Cter in SUMO2); alternate cross-link involves residue Lys-613. Lys-622 is covalently cross-linked (Glycyl lysine isopeptide (Lys-Gly) (interchain with G-Cter in SUMO2)). C2H2-type zinc fingers lie at residues 641–663 (YPCRFCNQVFAFSGVLRAHVRSH), 669–691 (YQCNICDYIAADKAALIRHIRTH), 697–720 (YICKICHYPFTVKANCERHLRKKH), 751–782 (TVCRLCGEDLKHYRALRIHMRTHCSRGLGGCH), and 788–813 (FECKECNAPFVAKRNCIHHILKQHLH). Glycyl lysine isopeptide (Lys-Gly) (interchain with G-Cter in SUMO2) cross-links involve residues Lys-855, Lys-883, and Lys-911. Disordered stretches follow at residues 939–991 (IPKS…SLET) and 1092–1177 (ADPG…AVDL). The segment covering 944-961 (KKGDKDTVVPSDAKKPEP) has biased composition (basic and acidic residues). Position 970 is a phosphoserine (Ser-970). A compositionally biased stretch (polar residues) spans 1097-1111 (SITSSNTVATDSPGS). Residues Ser-1125, Ser-1137, and Ser-1138 each carry the phosphoserine modification. Positions 1137–1146 (SSPEEALPTE) are enriched in low complexity. Basic residues predominate over residues 1155 to 1165 (SRKRGRKRGLR). 4 positions are modified to phosphoserine: Ser-1172, Ser-1179, Ser-1180, and Ser-1230. 4 disordered regions span residues 1195 to 1235 (TNKF…AEDR), 1273 to 1368 (HTDS…QSLD), 1383 to 1521 (SEAG…RKKV), and 1564 to 1670 (VRHQ…SPAA). The C2H2-type 12 zinc-finger motif lies at 1251 to 1273 (INCPHCPRVFPWASSLQRHMLTH). Residues 1273-1285 (HTDSQSDTDTLTT) show a composition bias toward low complexity. Residues 1327–1346 (SEEEEEKETEENPEPEEECR) are compositionally biased toward acidic residues. Residues 1400 to 1422 (HACDTCGKNFKFLGTLSRHKKAH) form a C2H2-type 13 zinc finger. 2 positions are modified to phosphoserine: Ser-1450 and Ser-1452. Residues 1492-1507 (TAEKRGDGDKRPKTDS) show a composition bias toward basic and acidic residues. 2 consecutive C2H2-type zinc fingers follow at residues 1520–1542 (KVCSVCNKRFWSLQDLTRHMRSH) and 1548–1570 (YKCQTCERTFTLKHSLVRHQRIH). Basic residues predominate over residues 1564 to 1580 (VRHQRIHQKARHSKHHG). Ser-1593 and Ser-1606 each carry phosphoserine. Positions 1645–1660 (AEQAAEPSAPKEQASP) are enriched in low complexity. Ser-1667 carries the post-translational modification Phosphoserine.

Belongs to the krueppel C2H2-type zinc-finger protein family. In terms of assembly, interacts with NEUROD1. Interacts with AR. Expressed in splenic B-cells.

The protein localises to the nucleus speckle. In terms of biological role, transcription factor that binds specifically to the RAS-responsive elements (RRE) of gene promoters. Represses the angiotensinogen gene. Negatively regulates the transcriptional activity of AR. Potentiates the transcriptional activity of NEUROD1. Binds specifically to the allelic variant of the CDKN2A promoter present in Balb/c mice, which leads to a down-regulation of CDKN2A expression in this strain, and, as a consequence, to an elevated susceptibility to pristane-induced tumors. Promotes brown adipocyte differentiation. May be involved in Ras/Raf-mediated cell differentiation by enhancing calcitonin expression. This is Ras-responsive element-binding protein 1 (Rreb1) from Mus musculus (Mouse).